We begin with the raw amino-acid sequence, 469 residues long: Bifunctional protein GlmU (469 aa).

Positions 1–236 are pyrophosphorylase; sequence MLNIKLNIVI…ISEINGINDC (236 aa). Residues 11–14, Lys-25, Gln-83, 88–89, 110–112, Gly-147, Glu-161, Asn-176, and Asn-234 contribute to the UDP-N-acetyl-alpha-D-glucosamine site; these read LAAG, GT, and YGD. Residue Asp-112 coordinates Mg(2+). Asn-234 contacts Mg(2+). The interval 237–257 is linker; that stretch reads AQLANLERLYQKEQAESLLRI. Positions 258–469 are N-acetyltransferase; it reads GVIIADPNRF…KKKIRYNIIY (212 aa). UDP-N-acetyl-alpha-D-glucosamine contacts are provided by Arg-340 and Lys-358. The active-site Proton acceptor is His-370. UDP-N-acetyl-alpha-D-glucosamine-binding residues include Tyr-373 and Asn-384. Acetyl-CoA-binding positions include Ala-387, 393-394, Ser-412, Ala-430, and Arg-447; that span reads NY.

This sequence in the N-terminal section; belongs to the N-acetylglucosamine-1-phosphate uridyltransferase family. The protein in the C-terminal section; belongs to the transferase hexapeptide repeat family. As to quaternary structure, homotrimer. Requires Mg(2+) as cofactor.

The protein localises to the cytoplasm. The enzyme catalyses alpha-D-glucosamine 1-phosphate + acetyl-CoA = N-acetyl-alpha-D-glucosamine 1-phosphate + CoA + H(+). The catalysed reaction is N-acetyl-alpha-D-glucosamine 1-phosphate + UTP + H(+) = UDP-N-acetyl-alpha-D-glucosamine + diphosphate. It participates in nucleotide-sugar biosynthesis; UDP-N-acetyl-alpha-D-glucosamine biosynthesis; N-acetyl-alpha-D-glucosamine 1-phosphate from alpha-D-glucosamine 6-phosphate (route II): step 2/2. The protein operates within nucleotide-sugar biosynthesis; UDP-N-acetyl-alpha-D-glucosamine biosynthesis; UDP-N-acetyl-alpha-D-glucosamine from N-acetyl-alpha-D-glucosamine 1-phosphate: step 1/1. Its pathway is bacterial outer membrane biogenesis; LPS lipid A biosynthesis. Catalyzes the last two sequential reactions in the de novo biosynthetic pathway for UDP-N-acetylglucosamine (UDP-GlcNAc). The C-terminal domain catalyzes the transfer of acetyl group from acetyl coenzyme A to glucosamine-1-phosphate (GlcN-1-P) to produce N-acetylglucosamine-1-phosphate (GlcNAc-1-P), which is converted into UDP-GlcNAc by the transfer of uridine 5-monophosphate (from uridine 5-triphosphate), a reaction catalyzed by the N-terminal domain. This Baumannia cicadellinicola subsp. Homalodisca coagulata protein is Bifunctional protein GlmU.